We begin with the raw amino-acid sequence, 386 residues long: MSVIKMTDLDLAGKRVFIRADLNVPVKDGKVTSDARIIASLPTIKLCLEAGAKVMVTSHLGRPTEGEYAEEFSLQPVVNYLNDALDCEVKLAKDYLDGLELNAGELVVLENVRFNKGEKKNDEELSKKYAALCDVFVMDAFGTAHRAQASTHGVGMFAEVACAGPLLAAELEALGKAMSNPERPLVAIVGGSKVSTKLTVLESLSKIADQLVVGGGIANTFIAAEGHNVGKSLYEADLVETAQKLMKECAIPVATDVACAKAFDENAEAEIKHVSEVQDDDMIFDLGPDSTAALAEIIANAKTILWNGPVGVFEFKNFEAGTKGISEAIAQSPAFSVAGGGDTLAAIDKFGIKADVSYISTGGGAFLEFVEGKVLPAVEMLEARAK.

Substrate is bound by residues 21-23 (DLN), arginine 36, 59-62 (HLGR), arginine 113, and arginine 146. Residues lysine 197, glutamate 314, and 340-343 (GGDT) contribute to the ATP site.

This sequence belongs to the phosphoglycerate kinase family. Monomer.

It is found in the cytoplasm. The catalysed reaction is (2R)-3-phosphoglycerate + ATP = (2R)-3-phospho-glyceroyl phosphate + ADP. The protein operates within carbohydrate degradation; glycolysis; pyruvate from D-glyceraldehyde 3-phosphate: step 2/5. This chain is Phosphoglycerate kinase, found in Vibrio vulnificus (strain CMCP6).